We begin with the raw amino-acid sequence, 466 residues long: Vimentin (466 aa).

Composition is skewed to low complexity over residues 1–13 (MSTR…SYRR) and 20–33 (TSSR…YVTT). The tract at residues 1-33 (MSTRSVSSSSYRRMFGGSGTSSRPSSNRSYVTT) is disordered. S2 is subject to N-acetylserine. The interval 2 to 95 (STRSVSSSSY…FSLADAINTE (94 aa)) is head. S5 carries the phosphoserine modification. Position 7 is a phosphoserine; by PKA and PKC; alternate (S7). O-linked (GlcNAc) serine; alternate glycosylation is present at S7. S8 bears the Phosphoserine mark. A phosphoserine; by PKC mark is found at S9 and S10. T20 bears the Phosphothreonine mark. Residues S25 and S26 each carry the phosphoserine modification. The O-linked (GlcNAc) threonine glycan is linked to T33. The O-linked (GlcNAc) serine; alternate glycan is linked to S34. Position 34 is a phosphoserine; by PKC; alternate (S34). A Phosphoserine; by CaMK2, PKA, PKC and ROCK2 modification is found at S39. S42 bears the Phosphoserine; by PKC mark. Position 47 is a phosphoserine; by PKA (S47). Phosphoserine is present on residues S49 and S51. A Phosphotyrosine modification is found at Y53. Phosphoserine occurs at positions 55 and 56. Y61 is subject to Phosphotyrosine. A Phosphoserine; by PKA and PKC modification is found at S66. Phosphoserine; by AURKB and ROCK2 is present on S72. Residues S73, S83, and S87 each carry the phosphoserine modification. Residues 96–131 (FKNTRTNEKVELQELNDRFANYIDKVRFLEQQNKIL) form a coil 1A region. A coiled-coil region spans residues 96–131 (FKNTRTNEKVELQELNDRFANYIDKVRFLEQQNKIL). Positions 103–411 (EKVELQELND…KLLEGEESRI (309 aa)) constitute an IF rod domain. K104 is covalently cross-linked (Glycyl lysine isopeptide (Lys-Gly) (interchain with G-Cter in SUMO2)). The residue at position 117 (Y117) is a Phosphotyrosine. Residues K120, K129, and K139 each carry the N6-acetyllysine; alternate modification. K120 and K129 each carry N6-succinyllysine; alternate. Glycyl lysine isopeptide (Lys-Gly) (interchain with G-Cter in SUMO2); alternate cross-links involve residues K120, K129, and K139. The linker 1 stretch occupies residues 132–153 (LAELEQLKGQGKSRLGDLYEEE). Position 144 is a phosphoserine (S144). The stretch at 154 to 245 (MRELRRQVDQ…KLHDEEIQEL (92 aa)) forms a coiled coil. The interval 154–245 (MRELRRQVDQ…KLHDEEIQEL (92 aa)) is coil 1B. K168 carries the post-translational modification N6-acetyllysine. K188 is modified (N6-acetyllysine; alternate). An N6-succinyllysine; alternate modification is found at K188. S214 is modified (phosphoserine). The residue at position 223 (K223) is an N6-acetyllysine; alternate. Residue K223 forms a Glycyl lysine isopeptide (Lys-Gly) (interchain with G-Cter in SUMO2); alternate linkage. Position 226 is a phosphoserine (S226). K235 is modified (N6-acetyllysine). A linker 12 region spans residues 246–268 (QAQIQEQHVQIDVDVSKPDLTAA). K262 participates in a covalent cross-link: Glycyl lysine isopeptide (Lys-Gly) (interchain with G-Cter in SUMO2). The interval 269–407 (LRDVRQQYES…ATYRKLLEGE (139 aa)) is coil 2. Residue K294 is modified to N6-acetyllysine; alternate. N6-succinyllysine; alternate is present on K294. K294 is covalently cross-linked (Glycyl lysine isopeptide (Lys-Gly) (interchain with G-Cter in SUMO2); alternate). The residue at position 299 (S299) is a Phosphoserine. A coiled-coil region spans residues 303 to 407 (NRNNDALRQA…ATYRKLLEGE (105 aa)). K313 is covalently cross-linked (Glycyl lysine isopeptide (Lys-Gly) (interchain with G-Cter in SUMO2)). S325 bears the Phosphoserine mark. Residues 326-329 (LTCE) carry the [IL]-x-C-x-x-[DE] motif motif. K373 carries the post-translational modification N6-acetyllysine; alternate. K373 participates in a covalent cross-link: Glycyl lysine isopeptide (Lys-Gly) (interchain with G-Cter in SUMO2); alternate. Residues 408-466 (ESRISLPLPNFSSLNLRETNLESLPLVDTHSKRTLLIKTVETRDGQVINETSQHHDDLE) are tail. S409, S412, S419, and S420 each carry phosphoserine. T426 carries the post-translational modification Phosphothreonine. S430 carries the phosphoserine modification. T436 carries the post-translational modification Phosphothreonine. Position 438 is a phosphoserine (S438). K439 is covalently cross-linked (Glycyl lysine isopeptide (Lys-Gly) (interchain with G-Cter in SUMO2)). The residue at position 445 (K445) is an N6-acetyllysine; alternate. K445 is modified (N6-succinyllysine; alternate). K445 participates in a covalent cross-link: Glycyl lysine isopeptide (Lys-Gly) (interchain with G-Cter in SUMO2); alternate. K445 is covalently cross-linked (Glycyl lysine isopeptide (Lys-Gly) (interchain with G-Cter in SUMO1); alternate). T446 and T458 each carry phosphothreonine. At S459 the chain carries Phosphoserine.

It belongs to the intermediate filament family. As to quaternary structure, homomer assembled from elementary dimers. Identified in complexes that contain VIM, EZR, AHNAK, BFSP1, BFSP2, ANK2, PLEC, PRX and spectrin. Interacts with BCAS3. Interacts with LGSN. Interacts with SYNM. Interacts (via rod region) with PLEC (via CH 1 domain). Interacts with STK33. Interacts with LARP6. Interacts with RAB8B. Interacts with TOR1A; the interaction associates TOR1A with the cytoskeleton. Interacts with TOR1AIP1. Interacts with TOR1AIP1. Interacts with DIAPH1. Interacts with EPPK1; interaction is dependent of higher-order structure of intermediate filament. Interacts with the non-receptor tyrosine kinase SRMS; the interaction leads to phosphorylation of VIM. Interacts with NOD2. Interacts (via head region) with CORO1C. Interacts with HDGF. Interacts with PRKCE (via phorbol-ester/DAG-type 2 domain). Interacts with BFSP2. Interacts with PPL. Interacts with PKP1 and PKP2. Interacts with SCRIB (via PDZ domains); the interaction protects SCRIB from proteasomal degradation and facilitates SCRIB localization to intermediate filaments, the interaction is reduced by cell contact inhibition. One of the most prominent phosphoproteins in various cells of mesenchymal origin. Phosphorylation is enhanced during cell division, at which time vimentin filaments are significantly reorganized. Phosphorylation by PKN1 inhibits the formation of filaments. Filament disassembly during mitosis is promoted by phosphorylation at Ser-55 as well as by nestin. Phosphorylated at Ser-56 by CDK5 during neutrophil secretion in the cytoplasm. Phosphorylated by STK33. Phosphorylated on tyrosine residues by SRMS. Post-translationally, S-nitrosylation is induced by interferon-gamma and oxidatively-modified low-densitity lipoprotein (LDL(ox)) possibly implicating the iNOS-S100A8/9 transnitrosylase complex.

The protein localises to the cytoplasm. It localises to the cytoskeleton. Its subcellular location is the nucleus matrix. The protein resides in the cell membrane. In terms of biological role, vimentins are class-III intermediate filaments found in various non-epithelial cells, especially mesenchymal cells. Vimentin is attached to the nucleus, endoplasmic reticulum, and mitochondria, either laterally or terminally. Plays a role in cell directional movement, orientation, cell sheet organization and Golgi complex polarization at the cell migration front. Protects SCRIB from proteasomal degradation and facilitates its localization to intermediate filaments in a cell contact-mediated manner. Its function is as follows. Involved with LARP6 in the stabilization of type I collagen mRNAs for CO1A1 and CO1A2. In Rattus norvegicus (Rat), this protein is Vimentin.